The sequence spans 247 residues: ATP synthase subunit a (247 aa).

6 helical membrane-spanning segments follow: residues 23 to 43 (ISFTNSSAMMVLSICLITLFL), 90 to 110 (LFMFVLFGNLLGMMPIPVIGF), 116 to 136 (VIVTFAMALVVFVGVTVIGFA), 145 to 165 (MFFPHGAPIATAVILIPIELI), 194 to 214 (GFVVSLGAFYLIPGAVPFAFL), and 215 to 235 (SAITVLEFGIALLQAYVFTIL).

Belongs to the ATPase A chain family. F-type ATPases have 2 components, CF(1) - the catalytic core - and CF(0) - the membrane proton channel. CF(1) has five subunits: alpha(3), beta(3), gamma(1), delta(1), epsilon(1). CF(0) has three main subunits: a(1), b(2) and c(9-12). The alpha and beta chains form an alternating ring which encloses part of the gamma chain. CF(1) is attached to CF(0) by a central stalk formed by the gamma and epsilon chains, while a peripheral stalk is formed by the delta and b chains.

Its subcellular location is the cell inner membrane. In terms of biological role, key component of the proton channel; it plays a direct role in the translocation of protons across the membrane. The sequence is that of ATP synthase subunit a from Paramagnetospirillum magneticum (strain ATCC 700264 / AMB-1) (Magnetospirillum magneticum).